The chain runs to 523 residues: Cytochrome P450 52A3-B (523 aa).

The chain crosses the membrane as a helical span at residues 17 to 34 (WYTILFGAAFTYFLSIAL). Position 471 (Cys-471) interacts with heme.

It belongs to the cytochrome P450 family. Requires heme as cofactor.

It is found in the membrane. Together with an NADPH cytochrome P450 the enzyme system catalyzes the terminal hydroxylation as the first step in the assimilation of alkanes and fatty acids. In Candida maltosa (Yeast), this protein is Cytochrome P450 52A3-B (CYP52A3-B).